The sequence spans 200 residues: Dephospho-CoA kinase (200 aa).

Residues 6 to 200 (AIALSGGIAT…KIKAKYLEKK (195 aa)) enclose the DPCK domain. Residue 14-19 (ATGKST) coordinates ATP.

It belongs to the CoaE family.

The protein resides in the cytoplasm. It catalyses the reaction 3'-dephospho-CoA + ATP = ADP + CoA + H(+). Its pathway is cofactor biosynthesis; coenzyme A biosynthesis; CoA from (R)-pantothenate: step 5/5. Catalyzes the phosphorylation of the 3'-hydroxyl group of dephosphocoenzyme A to form coenzyme A. This chain is Dephospho-CoA kinase, found in Sulfurimonas denitrificans (strain ATCC 33889 / DSM 1251) (Thiomicrospira denitrificans (strain ATCC 33889 / DSM 1251)).